A 20-amino-acid polypeptide reads, in one-letter code: Hongotoxin-5 (20 aa).

This sequence belongs to the short scorpion toxin superfamily. Potassium channel inhibitor family. Alpha-KTx 02 subfamily. As to expression, expressed by the venom gland.

The protein localises to the secreted. Its function is as follows. Potent selective inhibitor of Kv1/KCNA voltage-gated potassium channels. This Centruroides limbatus (Bark scorpion) protein is Hongotoxin-5.